Here is a 263-residue protein sequence, read N- to C-terminus: tRNA (guanine-N(7)-)-methyltransferase (263 aa).

A compositionally biased stretch (polar residues) spans 1–10 (MLPQDPSTEP). The segment at 1–38 (MLPQDPSTEPTPADDAAPVDSAGQASAPSPADPEGVAH) is disordered. Positions 91, 116, 143, and 166 each coordinate S-adenosyl-L-methionine. Aspartate 166 is an active-site residue. Lysine 170 contacts substrate. Positions 172-177 (RHNKRR) are interaction with RNA. Residues aspartate 202 and 240 to 243 (TKFE) each bind substrate.

It belongs to the class I-like SAM-binding methyltransferase superfamily. TrmB family.

The enzyme catalyses guanosine(46) in tRNA + S-adenosyl-L-methionine = N(7)-methylguanosine(46) in tRNA + S-adenosyl-L-homocysteine. Its pathway is tRNA modification; N(7)-methylguanine-tRNA biosynthesis. Functionally, catalyzes the formation of N(7)-methylguanine at position 46 (m7G46) in tRNA. In Cupriavidus necator (strain ATCC 17699 / DSM 428 / KCTC 22496 / NCIMB 10442 / H16 / Stanier 337) (Ralstonia eutropha), this protein is tRNA (guanine-N(7)-)-methyltransferase.